A 765-amino-acid chain; its full sequence is Alpha,alpha-trehalose phosphorylase (765 aa).

Position 352–353 (352–353 (WD)) interacts with substrate. Glu479 functions as the Proton donor in the catalytic mechanism. 591-592 (KQ) is a binding site for substrate.

Belongs to the glycosyl hydrolase 65 family. As to quaternary structure, homodimer.

The enzyme catalyses alpha,alpha-trehalose + phosphate = beta-D-glucose 1-phosphate + D-glucose. The protein operates within glycan degradation; trehalose degradation. In terms of biological role, catalyzes the reversible phosphorolytic cleavage of trehalose. Phosphorolysis is specific for trehalose. In Geobacillus stearothermophilus (Bacillus stearothermophilus), this protein is Alpha,alpha-trehalose phosphorylase (treP).